The primary structure comprises 575 residues: Potassium-transporting ATPase potassium-binding subunit (575 aa).

Transmembrane regions (helical) follow at residues 4-24 (SAWG…WPVG), 61-81 (LRYA…VYAL), 133-153 (GLAV…FALI), 180-200 (LWVL…QGVI), 258-278 (LANL…CFAF), 289-309 (WAVL…VIPA), 344-364 (IDAS…AVIA), 372-392 (LGGM…GGVG), 394-414 (GLYG…LMIG), 431-451 (LISI…AVAV), 499-519 (LLGL…LAIA), and 545-565 (LLIG…LALG).

The protein belongs to the KdpA family. As to quaternary structure, the system is composed of three essential subunits: KdpA, KdpB and KdpC.

The protein resides in the cell inner membrane. Functionally, part of the high-affinity ATP-driven potassium transport (or Kdp) system, which catalyzes the hydrolysis of ATP coupled with the electrogenic transport of potassium into the cytoplasm. This subunit binds the periplasmic potassium ions and delivers the ions to the membrane domain of KdpB through an intramembrane tunnel. The sequence is that of Potassium-transporting ATPase potassium-binding subunit from Variovorax paradoxus (strain S110).